The following is a 301-amino-acid chain: Troponin T, cardiac muscle (301 aa).

Acidic residues-rich tracts occupy residues 1–42 (MSDL…EEEA) and 50–74 (AETE…DGPV). 2 disordered regions span residues 1–99 (MSDL…GERV) and 125–223 (ENRK…KKKK). Position 2 is an N-acetylserine (serine 2). Phosphoserine; by CK2 is present on serine 2. Pro residues predominate over residues 82–93 (RPFMPNLVPPKI). 2 stretches are compositionally biased toward basic and acidic residues: residues 125-186 (ENRK…DEAR) and 206-223 (QTER…KKKK). At threonine 207 the chain carries Phosphothreonine; by PKC/PRKCA. The residue at position 211 (serine 211) is a Phosphoserine; by PKC/PRKCA. Residue threonine 216 is modified to Phosphothreonine; by PKC/PRKCA and RAF1. Phosphothreonine; by PKC/PRKCA is present on threonine 297.

The protein belongs to the troponin T family. In terms of assembly, binds with troponins I and C to make the thin-filament regulatory complex, troponin. In terms of processing, phosphorylation at Thr-216 by PRKCA induces significant reduction in myofilament calcium sensitivity and actomyosin ATPase activity. As to expression, the major isoform in adult heart is CTNT4.

Functionally, troponin T is the tropomyosin-binding subunit of troponin, the thin filament regulatory complex which confers calcium-sensitivity to striated muscle actomyosin ATPase activity. The polypeptide is Troponin T, cardiac muscle (TNNT2) (Oryctolagus cuniculus (Rabbit)).